Here is a 353-residue protein sequence, read N- to C-terminus: Very-long-chain 3-oxoacyl-CoA reductase (353 aa).

A helical transmembrane segment spans residues 33 to 53 (AAWALIAAGGFFVISRALLFG). Residues Val78, Asp133, Asp141, Asn160, Tyr227, Lys231, Ile260, and Ser262 each contribute to the NADP(+) site. The active-site Proton donor is the Tyr227. Lys231 serves as the catalytic Lowers pKa of active site Tyr.

The protein belongs to the short-chain dehydrogenases/reductases (SDR) family.

The protein resides in the endoplasmic reticulum membrane. The catalysed reaction is a very-long-chain (3R)-3-hydroxyacyl-CoA + NADP(+) = a very-long-chain 3-oxoacyl-CoA + NADPH + H(+). Its pathway is lipid metabolism; fatty acid biosynthesis. Component of the microsomal membrane bound fatty acid elongation system, which produces the 26-carbon very long-chain fatty acids (VLCFA) from palmitate. Catalyzes the reduction of the 3-ketoacyl-CoA intermediate that is formed in each cycle of fatty acid elongation. VLCFAs serve as precursors for ceramide and sphingolipids. The protein is Very-long-chain 3-oxoacyl-CoA reductase of Aspergillus terreus (strain NIH 2624 / FGSC A1156).